Here is a 1392-residue protein sequence, read N- to C-terminus: ENHANCER OF AG-4 protein 2 (1392 aa).

Residues 20–77 form the PWWP domain; the sequence is LGDLVLAKVKGFPAWPAKISRPEDWDRAPDPKKYFVQFFGTEEIAFVAPPDIQAFTSE. The segment covering 184–194 has biased composition (polar residues); sequence ESKVKTTSPVS. 4 disordered regions span residues 184 to 354, 384 to 428, 575 to 613, and 723 to 766; these read ESKV…STGT, KRQR…PAAQ, KKPQ…GERL, and QGHH…GGSL. Basic and acidic residues-rich tracts occupy residues 196 to 215, 239 to 258, and 311 to 345; these read SLEH…DKGT, KEAG…DKSN, and LESE…KCEI. The span at 391–400 shows a compositional bias: polar residues; the sequence is EHATSPSFSG. Basic and acidic residues predominate over residues 401 to 417; the sequence is SRDKSGKGHLEQKDRSS. Composition is skewed to polar residues over residues 591 to 601 and 725 to 744; these read KISSSQSQPAN and HHQQ…SRNQ. In terms of domain architecture, CID spans 771 to 912; that stretch reads EAAISRDAFE…RYIDDIRASG (142 aa). Disordered regions lie at residues 957–986, 1014–1356, and 1369–1392; these read FFSS…AGER, LEME…NYQP, and PGHT…WRPA. Residues 1059-1129 show a composition bias toward pro residues; the sequence is EDSPPLPQES…SPPPPPPPPS (71 aa). Residues 1157–1175 are compositionally biased toward polar residues; sequence LSHQTYPGSMQQDRSSIFT. Low complexity predominate over residues 1215 to 1225; that stretch reads SSREPSSFTSS. Polar residues-rich tracts occupy residues 1240-1255 and 1265-1284; these read EASS…TPLS and APSS…QHSY. Basic and acidic residues predominate over residues 1293–1306; sequence QRDDARRYRNEEPW. Polar residues predominate over residues 1311–1320; it reads SGHSAENQNG.

As to expression, expressed in the inflorescence meristem, floral primordia, inflorescence stem, and floral pedicels. Also detected in the shoot apical meristem, stems, leaves, embryos, and roots.

It is found in the nucleus. Transcription factor that functions as a repressor of flowering by enhancing the expression of several genes that delay flowering including FLC, FLM/MAF1, MAF2 and SVP. Also acts in the floral homeotic AGAMOUS (AG) pathway, specifically by processing the AGAMOUS pre-mRNA. Functions in association with HUA1 and HEN4 in AG pre-mRNA processing. Involved in all three aspects of the AG functions, the specification of stamen and carpel identities, the control of floral determinacy, and the spatial restriction of AP1 expression. Acts as a transcription regulator that controls anthocyanin accumulation. This chain is ENHANCER OF AG-4 protein 2, found in Arabidopsis thaliana (Mouse-ear cress).